Consider the following 46-residue polypeptide: Photosystem II reaction center protein K (46 aa).

A propeptide spanning residues 1–9 is cleaved from the precursor; it reads MLTLLNTFA. A helical transmembrane segment spans residues 25-45; the sequence is LPLIPLFFFLLVFVWQAAVGF.

This sequence belongs to the PsbK family. As to quaternary structure, PSII is composed of 1 copy each of membrane proteins PsbA, PsbB, PsbC, PsbD, PsbE, PsbF, PsbH, PsbI, PsbJ, PsbK, PsbL, PsbM, PsbT, PsbX, PsbY, Psb30/Ycf12, peripheral proteins PsbO, CyanoQ (PsbQ), PsbU, PsbV and a large number of cofactors. It forms dimeric complexes.

It is found in the cellular thylakoid membrane. Its function is as follows. One of the components of the core complex of photosystem II (PSII). PSII is a light-driven water:plastoquinone oxidoreductase that uses light energy to abstract electrons from H(2)O, generating O(2) and a proton gradient subsequently used for ATP formation. It consists of a core antenna complex that captures photons, and an electron transfer chain that converts photonic excitation into a charge separation. This is Photosystem II reaction center protein K from Prochlorococcus marinus (strain MIT 9515).